Reading from the N-terminus, the 188-residue chain is Protein TIFY 9 (188 aa).

Residues Asp-20–Gly-41 form a disordered region. The span at Ser-28 to Ser-38 shows a compositional bias: low complexity. Positions Ala-80–Glu-114 constitute a Tify domain. Residues Pro-135–Gln-160 carry the Jas motif. Positions Leu-156–Ser-188 are disordered. The segment covering Leu-179 to Ser-188 has biased composition (basic and acidic residues).

The protein belongs to the TIFY/JAZ family. Ubiquitinated. Targeted for degradation by the SCF(COI1) E3 ubiquitin ligase-proteasome pathway during jasmonate signaling.

Repressor of jasmonate responses. In Oryza sativa subsp. indica (Rice), this protein is Protein TIFY 9.